The following is a 305-amino-acid chain: Mitochondrial uncoupling protein 3 (305 aa).

Solcar repeat units lie at residues 14-100 (TRIL…LKGL), 112-204 (LPLA…AKHF), and 213-299 (DNIF…FRLL). 6 consecutive transmembrane segments (helical) span residues 16-36 (ILLA…IDLT), 69-89 (VIGL…YTPI), 118-138 (ALVG…ADLV), 178-198 (KGVL…LACY), 219-239 (TLAS…ADVV), and 272-292 (WKGF…FWVS).

The protein belongs to the mitochondrial carrier (TC 2.A.29) family.

Its subcellular location is the mitochondrion inner membrane. Functionally, PUMPS are mitochondrial transporter proteins that create proton leaks across the inner mitochondrial membrane, thus uncoupling oxidative phosphorylation. This leads to a decrease in the efficiency of oxidative phosphorylation and an increase in heat production. May be involved in protecting plant cells against oxidative stress damage. This is Mitochondrial uncoupling protein 3 (PUMP3) from Arabidopsis thaliana (Mouse-ear cress).